Consider the following 182-residue polypeptide: Small ribosomal subunit protein uS4c (182 aa).

The segment at 13 to 34 is disordered; sequence GLTSKRPRSGSDPKNQLRSGKR. Residues 82 to 143 enclose the S4 RNA-binding domain; it reads MRLDNILFRL…KQRSKALIQN (62 aa).

Belongs to the universal ribosomal protein uS4 family. In terms of assembly, part of the 30S ribosomal subunit. Contacts protein S5. The interaction surface between S4 and S5 is involved in control of translational fidelity.

Its subcellular location is the plastid. The protein localises to the chloroplast. One of the primary rRNA binding proteins, it binds directly to 16S rRNA where it nucleates assembly of the body of the 30S subunit. In terms of biological role, with S5 and S12 plays an important role in translational accuracy. The sequence is that of Small ribosomal subunit protein uS4c (rps4) from Iris lutescens (Crimean iris).